The sequence spans 31 residues: Electron transfer flavoprotein-ubiquinone oxidoreductase (31 aa).

FAD is bound at residue 11–25; it reads VVIVGAGGAGLSAAI.

In terms of assembly, monomer. The cofactor is [4Fe-4S] cluster. FAD serves as cofactor.

It carries out the reaction a ubiquinone + reduced [electron-transfer flavoprotein] = a ubiquinol + oxidized [electron-transfer flavoprotein] + H(+). Functionally, accepts electrons from ETF and reduces ubiquinone. This Paracoccus denitrificans protein is Electron transfer flavoprotein-ubiquinone oxidoreductase.